Here is a 334-residue protein sequence, read N- to C-terminus: D-fructose 1,6-bisphosphatase class 2/sedoheptulose 1,7-bisphosphatase (334 aa).

Asp33, Glu57, Asp85, and Glu88 together coordinate Mn(2+). Substrate is bound by residues 88-90 (EGT), Tyr119, 164-166 (RAR), and 186-188 (DGD). A Mn(2+)-binding site is contributed by Glu213.

Belongs to the FBPase class 2 family. As to quaternary structure, homotetramer. Mn(2+) is required as a cofactor.

The enzyme catalyses beta-D-fructose 1,6-bisphosphate + H2O = beta-D-fructose 6-phosphate + phosphate. The catalysed reaction is D-sedoheptulose 1,7-bisphosphate + H2O = D-sedoheptulose 7-phosphate + phosphate. It functions in the pathway carbohydrate biosynthesis; Calvin cycle. In terms of biological role, catalyzes the hydrolysis of fructose 1,6-bisphosphate (Fru 1,6-P2) and sedoheptulose 1,7-bisphosphate (Sed 1,7-P2) to fructose 6-phosphate and sedoheptulose 7-phosphate, respectively. The protein is D-fructose 1,6-bisphosphatase class 2/sedoheptulose 1,7-bisphosphatase of Synechococcus sp. (strain RCC307).